We begin with the raw amino-acid sequence, 257 residues long: Imidazole glycerol phosphate synthase subunit HisF (257 aa).

Catalysis depends on residues Asp-12 and Asp-131.

The protein belongs to the HisA/HisF family. As to quaternary structure, heterodimer of HisH and HisF.

The protein localises to the cytoplasm. The enzyme catalyses 5-[(5-phospho-1-deoxy-D-ribulos-1-ylimino)methylamino]-1-(5-phospho-beta-D-ribosyl)imidazole-4-carboxamide + L-glutamine = D-erythro-1-(imidazol-4-yl)glycerol 3-phosphate + 5-amino-1-(5-phospho-beta-D-ribosyl)imidazole-4-carboxamide + L-glutamate + H(+). It participates in amino-acid biosynthesis; L-histidine biosynthesis; L-histidine from 5-phospho-alpha-D-ribose 1-diphosphate: step 5/9. Its function is as follows. IGPS catalyzes the conversion of PRFAR and glutamine to IGP, AICAR and glutamate. The HisF subunit catalyzes the cyclization activity that produces IGP and AICAR from PRFAR using the ammonia provided by the HisH subunit. The polypeptide is Imidazole glycerol phosphate synthase subunit HisF (Kineococcus radiotolerans (strain ATCC BAA-149 / DSM 14245 / SRS30216)).